Consider the following 245-residue polypeptide: MIIPAIDLIDGHVVRLYQGDYEQKTQYELDPVEVVHDYADQGATWLHIVDLTGAKDTSKRQLELIKSMVDTKRMQFQAGGGIRSEEEVAQLLETGVSRVVIGSLAVKQPELVKSWVEKYGPERIVLALDININESGEKLIATHGWQENSGVALEGLLEDFATVGAKHVLCTDISRDGTLQGANTELYQEMAARFPNVSWQASGGIGSINDIEALKPTNVGGVILGRALLEGKFTVKEAIACWQSA.

Residue aspartate 7 is the Proton acceptor of the active site. The active-site Proton donor is aspartate 129.

This sequence belongs to the HisA/HisF family.

The protein resides in the cytoplasm. It carries out the reaction 1-(5-phospho-beta-D-ribosyl)-5-[(5-phospho-beta-D-ribosylamino)methylideneamino]imidazole-4-carboxamide = 5-[(5-phospho-1-deoxy-D-ribulos-1-ylimino)methylamino]-1-(5-phospho-beta-D-ribosyl)imidazole-4-carboxamide. It functions in the pathway amino-acid biosynthesis; L-histidine biosynthesis; L-histidine from 5-phospho-alpha-D-ribose 1-diphosphate: step 4/9. The chain is 1-(5-phosphoribosyl)-5-[(5-phosphoribosylamino)methylideneamino] imidazole-4-carboxamide isomerase from Alteromonas mediterranea (strain DSM 17117 / CIP 110805 / LMG 28347 / Deep ecotype).